Here is a 278-residue protein sequence, read N- to C-terminus: 4-diphosphocytidyl-2-C-methyl-D-erythritol kinase (278 aa).

Lys-9 is a catalytic residue. 89 to 99 (PVASGIGGGSA) is a binding site for ATP. Asp-128 is a catalytic residue.

This sequence belongs to the GHMP kinase family. IspE subfamily.

It catalyses the reaction 4-CDP-2-C-methyl-D-erythritol + ATP = 4-CDP-2-C-methyl-D-erythritol 2-phosphate + ADP + H(+). The protein operates within isoprenoid biosynthesis; isopentenyl diphosphate biosynthesis via DXP pathway; isopentenyl diphosphate from 1-deoxy-D-xylulose 5-phosphate: step 3/6. Its function is as follows. Catalyzes the phosphorylation of the position 2 hydroxy group of 4-diphosphocytidyl-2C-methyl-D-erythritol. The sequence is that of 4-diphosphocytidyl-2-C-methyl-D-erythritol kinase from Cereibacter sphaeroides (strain ATCC 17029 / ATH 2.4.9) (Rhodobacter sphaeroides).